A 33-amino-acid chain; its full sequence is Cyanophlyctin-beta (33 aa).

A disulfide bridge connects residues Cys27 and Cys33.

Expressed by the skin glands.

It localises to the secreted. In terms of biological role, antimicrobial peptide active against E.coli (MIC=5 uM), K.pneumoniae (MIC=10 uM), B.cereus (MIC=7 uM) and S.aureus (MIC=12 uM). Has very little hemolytic activity. The polypeptide is Cyanophlyctin-beta (Euphlyctis cyanophlyctis (Skittering frog)).